The following is an 858-amino-acid chain: Leucine--tRNA ligase (858 aa).

The short motif at 42-52 (PYPSGNLHMGH) is the 'HIGH' region element. Positions 584-594 (NPNRSDSSRYI) are enriched in polar residues. The segment at 584-611 (NPNRSDSSRYIPSNLVDPNDPKDPETGE) is disordered. The 'KMSKS' region motif lies at 619 to 623 (TMSKS). Lysine 622 is an ATP binding site.

Belongs to the class-I aminoacyl-tRNA synthetase family.

It localises to the cytoplasm. It carries out the reaction tRNA(Leu) + L-leucine + ATP = L-leucyl-tRNA(Leu) + AMP + diphosphate. The polypeptide is Leucine--tRNA ligase (Cyanothece sp. (strain PCC 7425 / ATCC 29141)).